Consider the following 210-residue polypeptide: N-(5'-phosphoribosyl)anthranilate isomerase (210 aa).

The protein belongs to the TrpF family.

It catalyses the reaction N-(5-phospho-beta-D-ribosyl)anthranilate = 1-(2-carboxyphenylamino)-1-deoxy-D-ribulose 5-phosphate. It functions in the pathway amino-acid biosynthesis; L-tryptophan biosynthesis; L-tryptophan from chorismate: step 3/5. This chain is N-(5'-phosphoribosyl)anthranilate isomerase, found in Pseudomonas fluorescens (strain ATCC BAA-477 / NRRL B-23932 / Pf-5).